The sequence spans 215 residues: Ras-related protein Rab-5A (215 aa).

Residues serine 29, alanine 30, glycine 32, lysine 33, serine 34, serine 35, histidine 46, glutamate 47, threonine 52, and glycine 78 each contribute to the GTP site. Mg(2+) is bound at residue serine 34. Short sequence motifs (switch) lie at residues 44–56 and 77–93; these read QFHE…IGAA and AGQE…YRGA. Threonine 52 is a binding site for Mg(2+). Serine 84 carries the phosphoserine modification. GTP contacts are provided by asparagine 133, lysine 134, aspartate 136, alanine 164, and lysine 165. A disordered region spans residues 185–215; sequence EPQNPGINCTRGRGVDLTEPTQPTRSQCCSN. Positions 203–215 are enriched in polar residues; it reads EPTQPTRSQCCSN. Residues cysteine 212 and cysteine 213 are each lipidated (S-geranylgeranyl cysteine).

This sequence belongs to the small GTPase superfamily. Rab family. Interacts with GDI1; this promotes dissociation from membranes; phosphorylation at Ser-84 disrupts this interaction. Interacts with GDI2; phosphorylation at Ser-84 disrupts the interaction. Interacts with SGSM1 and SGSM3. Interacts with PIK3CB. Interacts with RIN1 and GAPVD1, which regulate its pathway, probably by acting as a GEF. Interacts with RINL. Interacts with ALS2CL, SUN2, ZFYVE20 and RUFY1. Interacts with RABEP1; one RABEP1 homodimer binds two RAB5A chains, but at opposite sides of the dimer. Interacts with OCRL and INPP5F. May be a component of a complex composed of RAB5A, DYN2 and PIK3C3. Does not interact with the BLOC-3 complex (heterodimer of HPS1 and HPS4). Interacts with CLN5. Interacts with APPL2. Interacts with F8A1/F8A2/F8A3. Found in a complex with F8A1/F8A2/F8A3, HTT and RAB5A; mediates the recruitment of HTT by RAB5A onto early endosomes. Interacts with ATP9A. Interacts with PPP1R21; mediates the recruitment of FERRY complex by RAB5A onto early endosomes. The cofactor is Mg(2+). Post-translationally, phosphorylation of Ser-84 in the switch II region by LRRK2 prevents the association of RAB regulatory proteins, including RAB GDP dissociation inhibitors GDI1 and GDI2.

Its subcellular location is the cell membrane. It localises to the early endosome membrane. It is found in the melanosome. The protein resides in the cytoplasmic vesicle. The protein localises to the cell projection. Its subcellular location is the ruffle. It localises to the membrane. It is found in the cytoplasm. The protein resides in the cytosol. The protein localises to the phagosome membrane. Its subcellular location is the endosome membrane. It carries out the reaction GTP + H2O = GDP + phosphate + H(+). Regulated by guanine nucleotide exchange factors (GEFs) including RINL, which promote the exchange of bound GDP for free GTP. Regulated by GTPase activating proteins (GAPs) which increase the GTP hydrolysis activity. Inhibited by GDP dissociation inhibitors (GDIs). Its function is as follows. The small GTPases Rab are key regulators of intracellular membrane trafficking, from the formation of transport vesicles to their fusion with membranes. Rabs cycle between an inactive GDP-bound form and an active GTP-bound form that is able to recruit to membranes different sets of downstream effectors directly responsible for vesicle formation, movement, tethering and fusion. RAB5A is required for the fusion of plasma membranes and early endosomes. Contributes to the regulation of filopodia extension. Required for the exosomal release of SDCBP, CD63, PDCD6IP and syndecan. Regulates maturation of apoptotic cell-containing phagosomes, probably downstream of DYN2 and PIK3C3. In Sus scrofa (Pig), this protein is Ras-related protein Rab-5A (RAB5A).